Consider the following 179-residue polypeptide: Large ribosomal subunit protein uL6 (179 aa).

It belongs to the universal ribosomal protein uL6 family. In terms of assembly, part of the 50S ribosomal subunit.

Its function is as follows. This protein binds to the 23S rRNA, and is important in its secondary structure. It is located near the subunit interface in the base of the L7/L12 stalk, and near the tRNA binding site of the peptidyltransferase center. The chain is Large ribosomal subunit protein uL6 from Syntrophomonas wolfei subsp. wolfei (strain DSM 2245B / Goettingen).